We begin with the raw amino-acid sequence, 263 residues long: Interleukin-15 receptor subunit alpha (263 aa).

Positions 1–32 (MASPQLRGYGVQAIPVLLLLLLLLLLPLRVTP) are cleaved as a signal peptide. Topologically, residues 33–205 (GTTCPPPVSI…ISPHSSKMTK (173 aa)) are extracellular. One can recognise a Sushi domain in the interval 34 to 98 (TTCPPPVSIE…WTTPSLKCIR (65 aa)). Cystine bridges form between cysteine 36/cysteine 78 and cysteine 62/cysteine 96. Asparagine 51 is a glycosylation site (N-linked (GlcNAc...) asparagine). A compositionally biased stretch (low complexity) spans 113 to 135 (TPKVTSQPESPSPSAKEPEAFSP). The tract at residues 113–178 (TPKVTSQPES…HKSSRAPSLA (66 aa)) is disordered. A compositionally biased stretch (polar residues) spans 136–145 (KSDTAMTTET). Over residues 154–169 (TPSQTTSAGTTGTGSH) the composition is skewed to low complexity. Residues 206-226 (VAISTSVLLVGAGVVMAFLAW) form a helical membrane-spanning segment. Residues 227 to 263 (YIKSRQPSQPCRVEVETMETVPMTVRASSKEDEDTGA) lie on the Cytoplasmic side of the membrane.

In terms of assembly, the interleukin-15 receptor IL15R is a heterotrimer of IL15RA, IL2RB and IL2RG. IL15RA also self-associates. Interacts with SYK. N-glycosylated and O-glycosylated. In terms of processing, a soluble form (sIL-15RA) arises from proteolytic shedding of the membrane-anchored receptor. It also binds IL15 and thus interferes with IL15 binding to the membrane receptor. Widely expressed.

It is found in the membrane. The protein localises to the nucleus membrane. It localises to the cell surface. The protein resides in the secreted. Its subcellular location is the extracellular space. Functionally, high-affinity receptor for interleukin-15. Can signal both in cis and trans where IL15R from one subset of cells presents IL15 to neighboring IL2RG-expressing cells. In neutrophils, binds and activates kinase SYK in response to IL15 stimulation. In neutrophils, required for IL15-induced phagocytosis in a SYK-dependent manner. The protein is Interleukin-15 receptor subunit alpha (Il15ra) of Mus musculus (Mouse).